Here is a 339-residue protein sequence, read N- to C-terminus: Ketol-acid reductoisomerase (NADP(+)) (339 aa).

Residues 1-182 (MRVYYDCDVN…GGGRSGIMKT (182 aa)) form the KARI N-terminal Rossmann domain. NADP(+) is bound by residues 24-27 (YGAQ), Ser51, Thr53, and 83-86 (DELQ). The active site involves His108. Residue Gly134 participates in NADP(+) binding. Positions 183 to 328 (TFREECETDL…DKIRSMMALT (146 aa)) constitute a KARI C-terminal knotted domain. Mg(2+) is bound by residues Asp191, Glu195, Glu227, and Glu231. Ser252 contacts substrate.

This sequence belongs to the ketol-acid reductoisomerase family. Mg(2+) is required as a cofactor.

It carries out the reaction (2R)-2,3-dihydroxy-3-methylbutanoate + NADP(+) = (2S)-2-acetolactate + NADPH + H(+). It catalyses the reaction (2R,3R)-2,3-dihydroxy-3-methylpentanoate + NADP(+) = (S)-2-ethyl-2-hydroxy-3-oxobutanoate + NADPH + H(+). It functions in the pathway amino-acid biosynthesis; L-isoleucine biosynthesis; L-isoleucine from 2-oxobutanoate: step 2/4. The protein operates within amino-acid biosynthesis; L-valine biosynthesis; L-valine from pyruvate: step 2/4. In terms of biological role, involved in the biosynthesis of branched-chain amino acids (BCAA). Catalyzes an alkyl-migration followed by a ketol-acid reduction of (S)-2-acetolactate (S2AL) to yield (R)-2,3-dihydroxy-isovalerate. In the isomerase reaction, S2AL is rearranged via a Mg-dependent methyl migration to produce 3-hydroxy-3-methyl-2-ketobutyrate (HMKB). In the reductase reaction, this 2-ketoacid undergoes a metal-dependent reduction by NADPH to yield (R)-2,3-dihydroxy-isovalerate. This is Ketol-acid reductoisomerase (NADP(+)) from Bartonella bacilliformis (strain ATCC 35685 / KC583 / Herrer 020/F12,63).